A 182-amino-acid polypeptide reads, in one-letter code: uncharacterized protein (182 aa).

The next 4 helical transmembrane spans lie at 19–39, 51–71, 87–107, and 118–138; these read LFGI…SIVS, IYLV…VVFI, IFTV…IELF, and CSPF…LAMC.

It is found in the membrane. This is an uncharacterized protein from Caenorhabditis elegans.